A 209-amino-acid polypeptide reads, in one-letter code: Mitochondrial import inner membrane translocase subunit Tim23 (209 aa).

The next 3 membrane-spanning stretches (helical) occupy residues 73 to 93 (FELA…FGAM), 125 to 145 (ALWA…GVII), and 181 to 197 (GLTG…YNNW).

It belongs to the Tim17/Tim22/Tim23 family. Component of the TIM23 complex at least composed of TIMM23, TIMM17 (TIMM17A or TIMM17B) and TIMM50; within this complex, directly interacts with TIMM50. The complex interacts with the TIMM44 component of the PAM complex and with DNAJC15. Upon mitochondrial depolarization, interacts with PINK1; the interaction is required for PINK1 accumulation at the outer mitochondrial membrane, kinase activation by autophosphorylation and PRKN recruitement to mitochondria.

Its subcellular location is the mitochondrion inner membrane. Essential component of the TIM23 complex, a complex that mediates the translocation of transit peptide-containing proteins across the mitochondrial inner membrane. Has a role in the activation of stress-induced mitophagy by protecting PINK1 from OMA1-mediated degradation and facilitating its accumulation at the outer mitochondrial membrane in response to depolarization. The polypeptide is Mitochondrial import inner membrane translocase subunit Tim23 (TIMM23) (Homo sapiens (Human)).